We begin with the raw amino-acid sequence, 402 residues long: 4-hydroxy-3-methylbut-2-enyl diphosphate reductase (402 aa).

Cys-66 lines the [4Fe-4S] cluster pocket. His-96 contacts (2E)-4-hydroxy-3-methylbut-2-enyl diphosphate. His-96 provides a ligand contact to dimethylallyl diphosphate. His-96 serves as a coordination point for isopentenyl diphosphate. Residue Cys-157 coordinates [4Fe-4S] cluster. Residue His-185 participates in (2E)-4-hydroxy-3-methylbut-2-enyl diphosphate binding. His-185 contributes to the dimethylallyl diphosphate binding site. Residue His-185 participates in isopentenyl diphosphate binding. The active-site Proton donor is Glu-187. Thr-250 provides a ligand contact to (2E)-4-hydroxy-3-methylbut-2-enyl diphosphate. Cys-288 is a [4Fe-4S] cluster binding site. Residues Ser-317, Ser-318, Asn-319, and Ser-379 each coordinate (2E)-4-hydroxy-3-methylbut-2-enyl diphosphate. Residues Ser-317, Ser-318, Asn-319, and Ser-379 each contribute to the dimethylallyl diphosphate site. Isopentenyl diphosphate is bound by residues Ser-317, Ser-318, Asn-319, and Ser-379.

This sequence belongs to the IspH family. Requires [4Fe-4S] cluster as cofactor.

The catalysed reaction is isopentenyl diphosphate + 2 oxidized [2Fe-2S]-[ferredoxin] + H2O = (2E)-4-hydroxy-3-methylbut-2-enyl diphosphate + 2 reduced [2Fe-2S]-[ferredoxin] + 2 H(+). It carries out the reaction dimethylallyl diphosphate + 2 oxidized [2Fe-2S]-[ferredoxin] + H2O = (2E)-4-hydroxy-3-methylbut-2-enyl diphosphate + 2 reduced [2Fe-2S]-[ferredoxin] + 2 H(+). The protein operates within isoprenoid biosynthesis; dimethylallyl diphosphate biosynthesis; dimethylallyl diphosphate from (2E)-4-hydroxy-3-methylbutenyl diphosphate: step 1/1. Its pathway is isoprenoid biosynthesis; isopentenyl diphosphate biosynthesis via DXP pathway; isopentenyl diphosphate from 1-deoxy-D-xylulose 5-phosphate: step 6/6. Its function is as follows. Catalyzes the conversion of 1-hydroxy-2-methyl-2-(E)-butenyl 4-diphosphate (HMBPP) into a mixture of isopentenyl diphosphate (IPP) and dimethylallyl diphosphate (DMAPP). Acts in the terminal step of the DOXP/MEP pathway for isoprenoid precursor biosynthesis. This chain is 4-hydroxy-3-methylbut-2-enyl diphosphate reductase, found in Nostoc punctiforme (strain ATCC 29133 / PCC 73102).